A 152-amino-acid polypeptide reads, in one-letter code: Endoribonuclease YbeY (152 aa).

The Zn(2+) site is built by His117, His121, and His127.

It belongs to the endoribonuclease YbeY family. Zn(2+) serves as cofactor.

Its subcellular location is the cytoplasm. In terms of biological role, single strand-specific metallo-endoribonuclease involved in late-stage 70S ribosome quality control and in maturation of the 3' terminus of the 16S rRNA. The protein is Endoribonuclease YbeY of Sulfurihydrogenibium sp. (strain YO3AOP1).